Consider the following 845-residue polypeptide: Proto-oncogene vav (845 aa).

A Calponin-homology (CH) domain is found at 1–119; it reads MELWRQCTHW…YTLSALSWTP (119 aa). The DH domain maps to 194-373; that stretch reads KRCCCLREIQ…RDLAQCVNEV (180 aa). One can recognise a PH domain in the interval 402–504; sequence RPKIDGELKI…WMEQFEMAIS (103 aa). The segment at 515–564 adopts a Phorbol-ester/DAG-type zinc-finger fold; that stretch reads GHDFQMFSFEETTSCKACQMLLRGTFYQGYRCYRCRAPAHKECLGRVPPC. The region spanning 592-660 is the SH3 1 domain; it reads LGLPKMEVFQ…PCNRVHPYVH (69 aa). Residues 671–765 enclose the SH2 domain; the sequence is WYAGPMERAG…SLDTTLQFPY (95 aa). The SH3 2 domain maps to 782–842; it reads KYFGTAKARY…PSNYVEEDYS (61 aa). Tyr-826 and Tyr-844 each carry phosphotyrosine.

In terms of assembly, interacts with SHB. Interacts with APS, DOCK2, GRB2, GRB3, DOCK2, SLA, TEC and ZNF655/VIK. Interacts with SIAH2; without leading to its degradation. Associates with BLNK, PLCG1, GRB2 and NCK1 in a B-cell antigen receptor-dependent fashion. Interacts with CBLB; which inhibits tyrosine phosphorylation and down-regulates activity. May interact with CCPG1. Interacts with CLNK. Interacts with THEMIS2. Interacts with NEK3 and this interaction is prolactin-dependent. Interacts with ITK. Interacts with PTK2B/PYK2. Interacts with HCK. Interacts with PTK2B/PYK2. Interacts (via SH2 domain) with SYK. Interacts with ANKRD54. Interacts with CD6. Interacts with isoform 2 of CRACR2A. Interacts with LCP2; this interaction plays a role in TCR-mediated cytokine production. In terms of processing, phosphorylated by FYN. Phosphorylated on tyrosine residues by HCK in response to IFNG and bacterial lipopolysaccharide (LPS). In terms of tissue distribution, widely expressed in hematopoietic cells but not in other cell types. Found in the spleen and lung.

Its function is as follows. Couples tyrosine kinase signals with the activation of the Rho/Rac GTPases, thus leading to cell differentiation and/or proliferation. This chain is Proto-oncogene vav (Vav1), found in Mus musculus (Mouse).